We begin with the raw amino-acid sequence, 431 residues long: Adenylosuccinate synthetase (431 aa).

GTP contacts are provided by residues 12–18 and 40–42; these read GDEGKGK and GHT. Aspartate 13 (proton acceptor) is an active-site residue. Mg(2+) is bound by residues aspartate 13 and glycine 40. Residues 13 to 16, 38 to 41, threonine 128, arginine 142, glutamine 225, threonine 240, and arginine 304 contribute to the IMP site; these read DEGK and NAGH. The Proton donor role is filled by histidine 41. 300 to 306 contacts substrate; the sequence is TTTGRPR. GTP is bound by residues arginine 306, 332–334, and 414–416; these read KLD and GVG.

It belongs to the adenylosuccinate synthetase family. In terms of assembly, homodimer. The cofactor is Mg(2+).

The protein resides in the cytoplasm. The enzyme catalyses IMP + L-aspartate + GTP = N(6)-(1,2-dicarboxyethyl)-AMP + GDP + phosphate + 2 H(+). Its pathway is purine metabolism; AMP biosynthesis via de novo pathway; AMP from IMP: step 1/2. Plays an important role in the de novo pathway of purine nucleotide biosynthesis. Catalyzes the first committed step in the biosynthesis of AMP from IMP. This is Adenylosuccinate synthetase from Thermomicrobium roseum (strain ATCC 27502 / DSM 5159 / P-2).